We begin with the raw amino-acid sequence, 103 residues long: N(4)-acetylcytidine amidohydrolase (103 aa).

Residues 6–101 (ITFFQRFQDD…QTQFYVIEFK (96 aa)) enclose the ASCH domain. The active-site Proton acceptor is the Lys21. The active-site Nucleophile is Thr24. Residue Glu74 is the Proton donor of the active site.

The protein belongs to the N(4)-acetylcytidine amidohydrolase family.

It carries out the reaction N(4)-acetylcytidine + H2O = cytidine + acetate + H(+). The enzyme catalyses N(4)-acetyl-2'-deoxycytidine + H2O = 2'-deoxycytidine + acetate + H(+). It catalyses the reaction N(4)-acetylcytosine + H2O = cytosine + acetate + H(+). Catalyzes the hydrolysis of N(4)-acetylcytidine (ac4C). In Escherichia coli O81 (strain ED1a), this protein is N(4)-acetylcytidine amidohydrolase (yqfB).